An 82-amino-acid polypeptide reads, in one-letter code: MKKILILLIRFYQKFISPMFPAKCRFYPTCSQYTLEAIKEHGTIKGTYLAIRRILKCHPFHEGGYDPVPKRKNKNSEGKREE.

Residues His-61–Glu-82 are disordered.

Belongs to the UPF0161 family.

It localises to the cell inner membrane. Could be involved in insertion of integral membrane proteins into the membrane. The polypeptide is Putative membrane protein insertion efficiency factor (Fusobacterium nucleatum subsp. nucleatum (strain ATCC 25586 / DSM 15643 / BCRC 10681 / CIP 101130 / JCM 8532 / KCTC 2640 / LMG 13131 / VPI 4355)).